The primary structure comprises 955 residues: Structure-specific endonuclease subunit SLX4 (955 aa).

Disordered regions lie at residues 75–173 (QAEQ…RTTS), 189–231 (PVTT…TVSR), 352–376 (GPSNDSKIPNQASPVKSKAPKKKPR), 539–608 (EMQK…PTKI), 621–648 (PIVASDVDSDNEPPPSNQQAYQMPPPPR), 705–784 (AAGQ…ASPD), and 819–846 (LDSDGEAGLSPSPSLSPEPVFSSPEKDS). Positions 123–137 (RKARKTANGVTKKKR) are enriched in basic residues. A compositionally biased stretch (polar residues) spans 150–159 (NEITTPTKNQ). The span at 189–198 (PVTTSTTDLT) shows a compositional bias: low complexity. A compositionally biased stretch (basic residues) spans 209–225 (TKSRVRKTSSAASRKKK). Polar residues predominate over residues 352–362 (GPSNDSKIPNQ). Positions 539–551 (EMQKSPSRSEPKG) are enriched in basic and acidic residues. Polar residues predominate over residues 579–601 (SANSAEHTLKTQASKSTHFASTT). Low complexity-rich tracts occupy residues 705-720 (AAGQSSAFATTSRTSA) and 727-737 (KTSTAAAAAKS). Composition is skewed to basic residues over residues 738–748 (PTKRPVGRPRK) and 767–776 (KRPRGRPKKN). Residues 828–841 (SPSPSLSPEPVFSS) are compositionally biased toward low complexity.

Belongs to the SLX4 family. As to quaternary structure, forms a heterodimer with SLX1. Phosphorylated in response to DNA damage.

Its subcellular location is the nucleus. Functionally, regulatory subunit of the SLX1-SLX4 structure-specific endonuclease that resolves DNA secondary structures generated during DNA repair and recombination. Has endonuclease activity towards branched DNA substrates, introducing single-strand cuts in duplex DNA close to junctions with ss-DNA. The chain is Structure-specific endonuclease subunit SLX4 from Pyricularia oryzae (strain 70-15 / ATCC MYA-4617 / FGSC 8958) (Rice blast fungus).